Reading from the N-terminus, the 387-residue chain is Beta-citrylglutamate synthase B (387 aa).

Residues 119–304 (FQELAGHGVP…VAGIIADYAA (186 aa)) enclose the ATP-grasp domain. ATP is bound by residues Lys-158, 193–203 (QKYIKESHGRD), and Arg-219. The Mg(2+) site is built by Asp-264, Glu-277, and Asn-279. Positions 264, 277, and 279 each coordinate Mn(2+). Residues 325–361 (ASETSEPELGPPASAAVDNMSASSSSVDSDPESTTER) are disordered. Residues 337–352 (ASAAVDNMSASSSSVD) show a composition bias toward low complexity.

The protein belongs to the RimK family. It depends on Mg(2+) as a cofactor. Requires Mn(2+) as cofactor. As to expression, strongly expressed in brain and testis. Expressed in eyes, thymus, lung, kidney, skeletal muscle, spleen, skin and heart. Expressed in neurons of the neocortex, the gray matter and Purkinje cells.

It is found in the cytoplasm. The enzyme catalyses citrate + L-glutamate + ATP = beta-citrylglutamate + ADP + phosphate + H(+). It carries out the reaction N-acetyl-L-aspartate + L-glutamate + ATP = N-acetyl-L-aspartyl-L-glutamate + ADP + phosphate + H(+). Functionally, catalyzes the synthesis of beta-citryl-L-glutamate and N-acetyl-L-aspartyl-L-glutamate. Beta-citryl-L-glutamate is synthesized more efficiently than N-acetyl-L-aspartyl-L-glutamate. This Mus musculus (Mouse) protein is Beta-citrylglutamate synthase B (Rimklb).